We begin with the raw amino-acid sequence, 208 residues long: 2-phospho-L-lactate guanylyltransferase (208 aa).

The protein belongs to the CofC family. Homodimer.

The enzyme catalyses (2S)-2-phospholactate + GTP + H(+) = (2S)-lactyl-2-diphospho-5'-guanosine + diphosphate. It functions in the pathway cofactor biosynthesis; coenzyme F420 biosynthesis. Guanylyltransferase that catalyzes the activation of (2S)-2-phospholactate (2-PL) as (2S)-lactyl-2-diphospho-5'-guanosine, via the condensation of 2-PL with GTP. It is involved in the biosynthesis of coenzyme F420, a hydride carrier cofactor. The chain is 2-phospho-L-lactate guanylyltransferase from Methanosarcina barkeri (strain Fusaro / DSM 804).